The primary structure comprises 690 residues: Molting protein mlt-10 (690 aa).

Residues methionine 1 to alanine 18 form the signal peptide. N-linked (GlcNAc...) asparagine glycosylation is found at asparagine 42 and asparagine 204. Residues isoleucine 219 to arginine 285 are a coiled coil. 2 N-linked (GlcNAc...) asparagine glycosylation sites follow: asparagine 305 and asparagine 415. 5 helical membrane-spanning segments follow: residues proline 514–leucine 534, leucine 544–leucine 564, phenylalanine 579–phenylalanine 599, valine 618–valine 638, and isoleucine 643–valine 663.

Belongs to the mlt-10-like family. As to expression, expressed in the major body hypodermal syncytium (Hyp7), the dorsal and ventral ridges of the hypodermis, hypodermal cells in the head and tail, and the pharyngeal myoepithelium, but not the lateral seam cells.

The protein resides in the membrane. It is found in the secreted. Functionally, required for the efficient removal of larval cuticles during the molting cycle as well as the synthesis of new cuticles. The chain is Molting protein mlt-10 from Caenorhabditis elegans.